Here is a 249-residue protein sequence, read N- to C-terminus: Ribonuclease PH (249 aa).

Phosphate is bound by residues Arg86 and 124 to 126; that span reads GTR.

The protein belongs to the RNase PH family. In terms of assembly, homohexameric ring arranged as a trimer of dimers.

It carries out the reaction tRNA(n+1) + phosphate = tRNA(n) + a ribonucleoside 5'-diphosphate. Functionally, phosphorolytic 3'-5' exoribonuclease that plays an important role in tRNA 3'-end maturation. Removes nucleotide residues following the 3'-CCA terminus of tRNAs; can also add nucleotides to the ends of RNA molecules by using nucleoside diphosphates as substrates, but this may not be physiologically important. Probably plays a role in initiation of 16S rRNA degradation (leading to ribosome degradation) during starvation. In Clostridium botulinum (strain Alaska E43 / Type E3), this protein is Ribonuclease PH.